Here is a 151-residue protein sequence, read N- to C-terminus: PTITNDGVSIAKEIELEDPYEKIGAELVKEVAKKTDDVAGDGTTTATVLAQALVKEGLRNVAAGANPLGLKRGIEKAVEKVTETLLKSAKEVETKEQIAATAGISAGDQSIGDLIAEAMDKVGNEGVITVEESNTFGLQLELTEGMRFDKG.

41–45 (DGTTT) serves as a coordination point for ATP.

It belongs to the chaperonin (HSP60) family. As to quaternary structure, forms a cylinder of 14 subunits composed of two heptameric rings stacked back-to-back. Interacts with the co-chaperonin GroES.

Its subcellular location is the cytoplasm. The enzyme catalyses ATP + H2O + a folded polypeptide = ADP + phosphate + an unfolded polypeptide.. In terms of biological role, together with its co-chaperonin GroES, plays an essential role in assisting protein folding. The GroEL-GroES system forms a nano-cage that allows encapsulation of the non-native substrate proteins and provides a physical environment optimized to promote and accelerate protein folding. This chain is Chaperonin GroEL, found in Mycobacteroides chelonae (Mycobacterium chelonae).